The primary structure comprises 509 residues: Zinc metalloproteinase aureolysin (509 aa).

A signal peptide spans 1–27; it reads MRKFSRYAFTSMATVTLLSSLTPAALA. Positions 28–208 are excised as a propeptide; the sequence is SDTNHKPATS…VVEKTNLVKE (181 aa). Asp-348 contributes to the Ca(2+) binding site. Position 352 (His-352) interacts with Zn(2+). The active site involves Glu-353. 2 residues coordinate Zn(2+): His-356 and Glu-376. 9 residues coordinate Ca(2+): Asp-387, Glu-389, Asp-390, Leu-392, Glu-395, Tyr-398, Thr-399, Lys-402, and Asp-405. His-436 serves as the catalytic Proton donor.

It belongs to the peptidase M4 family. Monomer. Requires Ca(2+) as cofactor. The cofactor is Zn(2+).

It carries out the reaction Cleavage of insulin B chain with specificity similar to that of thermolysin, preferring hydrophobic P1' residues. Activates the glutamyl endopeptidase (EC 3.4.21.19) of Staphylococcus aureus.. Plays an essential role in immune evasion by helping bacteria to resist complement-mediated killing by neutrophils. Inhibits the deposition of host C3b on bacterial surfaces and the release of the chemoattractant C5a by cleaving the central complement protein C3. The cleavage site renders the C3b molecule vulnerable to proteolytic degradation by host regulators. Cleaves and inactivates host SERPINA1, which is an endogenous protease inhibitor essential for controlling neutrophil serine protease elastase. Also plays an essential role in the cleavage and subsequent activation of the serine protease SspA (glutamyl endopeptidase) which is involved in colonization and infection of human tissues. The sequence is that of Zinc metalloproteinase aureolysin from Staphylococcus aureus.